The following is a 624-amino-acid chain: DNA mismatch repair protein MutL (624 aa).

The disordered stretch occupies residues 336-357 (GEGFHETSDSFSSRSSQHSDAR). The segment covering 344-353 (DSFSSRSSQH) has biased composition (low complexity).

Belongs to the DNA mismatch repair MutL/HexB family.

In terms of biological role, this protein is involved in the repair of mismatches in DNA. It is required for dam-dependent methyl-directed DNA mismatch repair. May act as a 'molecular matchmaker', a protein that promotes the formation of a stable complex between two or more DNA-binding proteins in an ATP-dependent manner without itself being part of a final effector complex. This Chlorobium phaeobacteroides (strain BS1) protein is DNA mismatch repair protein MutL.